The primary structure comprises 411 residues: Heparan-sulfate 6-O-sulfotransferase 1 (411 aa).

Residues 1–19 are Cytoplasmic-facing; that stretch reads MRRRRAGGRTMVERASKFV. The helical; Signal-anchor for type II membrane protein transmembrane segment at 20-37 threads the bilayer; it reads LVVAGSACFMLILYQYAG. At 38-411 the chain is on the lumenal side; that stretch reads PGLSLGAPGG…DYMSHIIEKW (374 aa). 93-101 serves as a coordination point for 3'-phosphoadenylyl sulfate; sequence HIQKTGGTT. Substrate is bound by residues 123–124, Arg-140, Trp-145, and His-150; that span reads KK. Residue His-150 is the Proton acceptor of the active site. 3'-phosphoadenylyl sulfate contacts are provided by Arg-185 and Ser-193. Substrate-binding residues include His-197 and Trp-204. An N-linked (GlcNAc...) asparagine glycan is attached at Asn-264. A 3'-phosphoadenylyl sulfate-binding site is contributed by 317 to 319; the sequence is MQY. An N-linked (GlcNAc...) asparagine glycan is attached at Asn-320. 323-324 contributes to the 3'-phosphoadenylyl sulfate binding site; sequence RA. Residues 352–386 are a coiled coil; the sequence is KDLFQQRYQYKRQLERREQRLRNREERLLHRSKEA. The interval 380-401 is disordered; the sequence is LHRSKEALPREDPEEPGRVPTE.

The protein belongs to the sulfotransferase 6 family. N-glycosylated. Expressed in fetal brain and liver.

It is found in the membrane. The enzyme catalyses alpha-D-glucosaminyl-[heparan sulfate](n) + 3'-phosphoadenylyl sulfate = 6-sulfo-alpha-D-glucosaminyl-[heparan sulfate](n) + adenosine 3',5'-bisphosphate + H(+). 6-O-sulfation enzyme which catalyzes the transfer of sulfate from 3'-phosphoadenosine 5'-phosphosulfate (PAPS) to position 6 of the N-sulfoglucosamine residue (GlcNS) of heparan sulfate. Critical for normal neuronal development where it may play a role in neuron branching. May also play a role in limb development. May prefer iduronic acid. The polypeptide is Heparan-sulfate 6-O-sulfotransferase 1 (Mus musculus (Mouse)).